A 334-amino-acid chain; its full sequence is Glycerol-1-phosphate dehydrogenase [NAD(P)+] (334 aa).

Residues 77–81 (GRPID) and 99–102 (TTAS) contribute to the NAD(+) site. Asp-104 lines the substrate pocket. Ser-108 is an NAD(+) binding site. Asp-147 contributes to the substrate binding site. Zn(2+)-binding residues include Asp-147 and His-225. His-229 provides a ligand contact to substrate. His-246 provides a ligand contact to Zn(2+).

Belongs to the glycerol-1-phosphate dehydrogenase family. It depends on Zn(2+) as a cofactor.

The protein localises to the cytoplasm. It carries out the reaction sn-glycerol 1-phosphate + NAD(+) = dihydroxyacetone phosphate + NADH + H(+). It catalyses the reaction sn-glycerol 1-phosphate + NADP(+) = dihydroxyacetone phosphate + NADPH + H(+). Its pathway is membrane lipid metabolism; glycerophospholipid metabolism. In terms of biological role, catalyzes the NAD(P)H-dependent reduction of dihydroxyacetonephosphate (DHAP or glycerone phosphate) to glycerol 1-phosphate (G1P). The G1P thus generated is used as the glycerophosphate backbone of phospholipids in the cellular membranes of Archaea. This Methanococcus maripaludis (strain DSM 14266 / JCM 13030 / NBRC 101832 / S2 / LL) protein is Glycerol-1-phosphate dehydrogenase [NAD(P)+].